The following is a 278-amino-acid chain: Release factor glutamine methyltransferase (278 aa).

Residues 117–121, Asp-140, and Asn-184 each bind S-adenosyl-L-methionine; that span reads GTGSG. Position 184 to 187 (184 to 187) interacts with substrate; sequence NPPY.

Belongs to the protein N5-glutamine methyltransferase family. PrmC subfamily.

The enzyme catalyses L-glutaminyl-[peptide chain release factor] + S-adenosyl-L-methionine = N(5)-methyl-L-glutaminyl-[peptide chain release factor] + S-adenosyl-L-homocysteine + H(+). Its function is as follows. Methylates the class 1 translation termination release factors RF1/PrfA and RF2/PrfB on the glutamine residue of the universally conserved GGQ motif. This chain is Release factor glutamine methyltransferase, found in Bacteroides thetaiotaomicron (strain ATCC 29148 / DSM 2079 / JCM 5827 / CCUG 10774 / NCTC 10582 / VPI-5482 / E50).